Here is a 31-residue protein sequence, read N- to C-terminus: Cytochrome b6-f complex subunit 6 (31 aa).

A helical transmembrane segment spans residues 4–26 (LTSYFGFLLAALTITSALFIGLN).

The protein belongs to the PetL family. The 4 large subunits of the cytochrome b6-f complex are cytochrome b6, subunit IV (17 kDa polypeptide, PetD), cytochrome f and the Rieske protein, while the 4 small subunits are PetG, PetL, PetM and PetN. The complex functions as a dimer.

Its subcellular location is the plastid. It localises to the chloroplast thylakoid membrane. In terms of biological role, component of the cytochrome b6-f complex, which mediates electron transfer between photosystem II (PSII) and photosystem I (PSI), cyclic electron flow around PSI, and state transitions. PetL is important for photoautotrophic growth as well as for electron transfer efficiency and stability of the cytochrome b6-f complex. This is Cytochrome b6-f complex subunit 6 from Blitum bonus-henricus (Good King Henry).